A 209-amino-acid chain; its full sequence is Response regulator protein VraR (209 aa).

In terms of domain architecture, Response regulatory spans 4 to 120 (KVLFVDDHEM…DIADAVRKTS (117 aa)). Asp-55 is modified (4-aspartylphosphate). The region spanning 141–206 (RAELYEMLTE…QAVIYAFQHN (66 aa)) is the HTH luxR-type domain. The H-T-H motif DNA-binding region spans 165 to 184 (NQEIASASHITIKTVKTHVS).

In terms of assembly, homodimer. Post-translationally, phosphorylated by VraS. Phosphorylation state of VraR controls dimerization of the protein.

It is found in the cytoplasm. Functionally, member of the two-component regulatory system VraS/VraR involved in the control of the cell wall peptidoglycan biosynthesis. Upon cellular stress, the histidine kinase VraS transfers the phosphoryl group onto VraR. Upon phosphorylation, VraR dimerizes at the N-terminal domain. In turn, phosphorylation-induced dimerization expands and enhances the VraR binding to its own promoter leading to increased expression and subsequent modulation of as many as 40 genes, which ultimately constitute the S.aureus response to cell wall damage. In addition, inhibits the host autophagic flux and delays the early stage of autophagosome formation, thereby promoting bacterial survival. Facilitates the ability of S.aureus to resist host polymorphonuclear leukocytes-mediated phagocytosis and killing thus contributing to immune evasion. In Staphylococcus aureus (strain Mu3 / ATCC 700698), this protein is Response regulator protein VraR (vraR).